A 500-amino-acid polypeptide reads, in one-letter code: Protein-cysteine N-palmitoyltransferase Rasp (500 aa).

10 consecutive transmembrane segments (helical) span residues 15 to 35 (IFVY…KIYG), 73 to 93 (GDFI…QGFI), 105 to 125 (FIGV…MVLL), 134 to 154 (IVSL…WILC), 206 to 226 (SLVQ…GPII), 243 to 263 (LGFV…QCAL), 293 to 313 (FMGQ…IAFA), 372 to 392 (LTFA…IWSI), 429 to 449 (LYAM…VYFI), and 461 to 481 (GAYL…YCFF). His-381 is a catalytic residue.

It belongs to the membrane-bound acyltransferase family. HHAT subfamily.

Its subcellular location is the membrane. The catalysed reaction is N-terminal L-cysteinyl-[protein] + hexadecanoyl-CoA = N-terminal N-hexadecanoyl-L-cysteinyl-[protein] + CoA + H(+). It carries out the reaction N-terminal L-cysteinyl-[protein]-C-terminal glycyl cholesterol ester + hexadecanoyl-CoA = N-terminal N-hexadecanoyl-L-cysteinyl-[protein]-C-terminal glycyl cholesterol ester + CoA + H(+). In terms of biological role, required in hedgehog (hh) expressing cells for production of appropriate signaling activity in embryos and in the imaginal precursors of adult tissues. Acts within the secretory pathway to catalyze N-terminal palmitoylation of Hh; this lipid modification is required for the embryonic and larval patterning activities of the Hh signal. Not required for Wg signaling. The chain is Protein-cysteine N-palmitoyltransferase Rasp (rasp) from Drosophila melanogaster (Fruit fly).